A 74-amino-acid polypeptide reads, in one-letter code: ATP synthase subunit 9, mitochondrial (74 aa).

2 helical membrane passes run 8-28 (IGAG…GNVF) and 50-70 (ILGF…AFLI).

The protein belongs to the ATPase C chain family. In terms of assembly, F-type ATPases have 2 components, CF(1) - the catalytic core - and CF(0) - the membrane proton channel. CF(1) has five subunits: alpha(3), beta(3), gamma(1), delta(1), epsilon(1). CF(0) has three main subunits: a, b and c.

The protein resides in the mitochondrion membrane. This protein is one of the chains of the nonenzymatic membrane component (F0) of mitochondrial ATPase. The chain is ATP synthase subunit 9, mitochondrial (ATP9) from Triticum aestivum (Wheat).